A 149-amino-acid polypeptide reads, in one-letter code: Large ribosomal subunit protein uL15 (149 aa).

Residues 1–12 (MSEPIKLHDLRP) show a composition bias toward basic and acidic residues. A disordered region spans residues 1-55 (MSEPIKLHDLRPAKGANKPKTRVGRGEASKGKTAGRGTKGTKARKQVSAAFEGGQ).

This sequence belongs to the universal ribosomal protein uL15 family. In terms of assembly, part of the 50S ribosomal subunit.

Binds to the 23S rRNA. This Corynebacterium kroppenstedtii (strain DSM 44385 / JCM 11950 / CIP 105744 / CCUG 35717) protein is Large ribosomal subunit protein uL15.